The sequence spans 129 residues: UPF0325 protein HCH_00487 (129 aa).

It belongs to the UPF0325 family.

In Hahella chejuensis (strain KCTC 2396), this protein is UPF0325 protein HCH_00487.